The primary structure comprises 467 residues: UDP-N-acetylmuramate--L-alanine ligase (467 aa).

114-120 (GTHGKTT) provides a ligand contact to ATP.

Belongs to the MurCDEF family.

The protein resides in the cytoplasm. The catalysed reaction is UDP-N-acetyl-alpha-D-muramate + L-alanine + ATP = UDP-N-acetyl-alpha-D-muramoyl-L-alanine + ADP + phosphate + H(+). Its pathway is cell wall biogenesis; peptidoglycan biosynthesis. Functionally, cell wall formation. This chain is UDP-N-acetylmuramate--L-alanine ligase, found in Nitrobacter winogradskyi (strain ATCC 25391 / DSM 10237 / CIP 104748 / NCIMB 11846 / Nb-255).